We begin with the raw amino-acid sequence, 456 residues long: Bis(5'-adenosyl)-triphosphatase enpp4 (456 aa).

Positions 1-18 are cleaved as a signal peptide; sequence MFNMKILVIPLFWGLVTG. Over 19–410 the chain is Extracellular; the sequence is YKGNSSDSSA…DQWCINLPEA (392 aa). The Zn(2+) site is built by aspartate 37 and threonine 73. Threonine 73 acts as the AMP-threonine intermediate in catalysis. Asparagine 94 serves as a coordination point for substrate. The N-linked (GlcNAc...) asparagine glycan is linked to asparagine 148. Residue tyrosine 157 coordinates substrate. An N-linked (GlcNAc...) asparagine glycan is attached at asparagine 169. Residues aspartate 192, histidine 196, aspartate 240, and histidine 241 each contribute to the Zn(2+) site. Aspartate 192 provides a ligand contact to substrate. Cysteine 257 and cysteine 290 are oxidised to a cystine. N-linked (GlcNAc...) asparagine glycosylation is found at asparagine 279 and asparagine 330. Histidine 339 lines the Zn(2+) pocket. N-linked (GlcNAc...) asparagine glycosylation occurs at asparagine 389. A disulfide bridge connects residues cysteine 397 and cysteine 404. The chain crosses the membrane as a helical span at residues 411 to 431; it reads IGIVVSALLVLTMLTGLMIFM. Over 432–456 the chain is Cytoplasmic; it reads RSRASTSRPFSRLQLQEDDDDPLID.

Belongs to the nucleotide pyrophosphatase/phosphodiesterase family. Requires Zn(2+) as cofactor.

It is found in the cell membrane. The catalysed reaction is P(1),P(3)-bis(5'-adenosyl) triphosphate + H2O = AMP + ADP + 2 H(+). Functionally, hydrolyzes extracellular Ap3A into AMP and ADP, and Ap4A into AMP and ATP. Ap3A and Ap4A are diadenosine polyphosphates thought to induce proliferation of vascular smooth muscle cells. Acts as a procoagulant, mediating platelet aggregation at the site of nascent thrombus via release of ADP from Ap3A and activation of ADP receptors. The sequence is that of Bis(5'-adenosyl)-triphosphatase enpp4 (Enpp4) from Mus musculus (Mouse).